A 440-amino-acid chain; its full sequence is tRNA-2-methylthio-N(6)-dimethylallyladenosine synthase (440 aa).

Positions 3–119 (KKFFIKTFGC…LPELINQAQA (117 aa)) constitute an MTTase N-terminal domain. [4Fe-4S] cluster is bound by residues C12, C48, C82, C158, C162, and C165. The region spanning 144–374 (RDNKYCAYVT…LELQKSILSE (231 aa)) is the Radical SAM core domain. The TRAM domain maps to 377–437 (KKYEGTVQEV…PFSLEGELLE (61 aa)).

It belongs to the methylthiotransferase family. MiaB subfamily. As to quaternary structure, monomer. [4Fe-4S] cluster serves as cofactor.

The protein localises to the cytoplasm. It catalyses the reaction N(6)-dimethylallyladenosine(37) in tRNA + (sulfur carrier)-SH + AH2 + 2 S-adenosyl-L-methionine = 2-methylsulfanyl-N(6)-dimethylallyladenosine(37) in tRNA + (sulfur carrier)-H + 5'-deoxyadenosine + L-methionine + A + S-adenosyl-L-homocysteine + 2 H(+). In terms of biological role, catalyzes the methylthiolation of N6-(dimethylallyl)adenosine (i(6)A), leading to the formation of 2-methylthio-N6-(dimethylallyl)adenosine (ms(2)i(6)A) at position 37 in tRNAs that read codons beginning with uridine. This is tRNA-2-methylthio-N(6)-dimethylallyladenosine synthase from Aquifex aeolicus (strain VF5).